The chain runs to 281 residues: MAFHMATRYAHSPEDIKHFDTTKLRQEFLMEKIFNAGDILLTYTYNDRMIFGGVVPTESSLEIKLSKELGVDFFLQRRELGVINIGGPGSIIVDGDKAAMVKQDGYYIGMGTKQVVFASDNPANPAKFYVVSTPAHKTYPNKKLPFANALAKPMGDQQHLNKRTIYKYIDASQMATCQLQMGYTVLEPGSSWNTMPAHTHARRMETYMYFDFAEPDTRVLHLLGEPTETRHIALFNEQAVVNPSWSIHCGVGTTNYAFIWAMCGENQTYDDMDQVPMNELR.

Zn(2+) is bound by residues H198, H200, E205, and H248.

It belongs to the KduI family. It depends on Zn(2+) as a cofactor.

The enzyme catalyses 5-dehydro-4-deoxy-D-glucuronate = 3-deoxy-D-glycero-2,5-hexodiulosonate. Its pathway is glycan metabolism; pectin degradation; 2-dehydro-3-deoxy-D-gluconate from pectin: step 4/5. In terms of biological role, catalyzes the isomerization of 5-dehydro-4-deoxy-D-glucuronate to 3-deoxy-D-glycero-2,5-hexodiulosonate. The sequence is that of 4-deoxy-L-threo-5-hexosulose-uronate ketol-isomerase from Lacticaseibacillus paracasei (strain ATCC 334 / BCRC 17002 / CCUG 31169 / CIP 107868 / KCTC 3260 / NRRL B-441) (Lactobacillus paracasei).